The primary structure comprises 695 residues: tRNA wybutosine-synthesizing protein 4 (695 aa).

Residues K38, R88, G115, 146 to 147 (DY), 196 to 197 (DL), and E224 contribute to the S-adenosyl-L-methionine site. Residue R88 is the Proton donor; for both methylation and methoxycarbonylation activities of the active site. Y229 functions as the Proton acceptor; for methoxycarbonylation activity in the catalytic mechanism.

This sequence belongs to the methyltransferase superfamily. LCMT family.

It localises to the cytoplasm. It is found in the mitochondrion. It carries out the reaction 7-[(3S)-3-amino-3-carboxypropyl]wyosine(37) in tRNA(Phe) + S-adenosyl-L-methionine = 7-[(3S)-(3-amino-3-methoxycarbonyl)propyl]wyosine(37) in tRNA(Phe) + S-adenosyl-L-homocysteine. The enzyme catalyses 7-[(3S)-(3-amino-3-methoxycarbonyl)propyl]wyosine(37) in tRNA(Phe) + S-adenosyl-L-methionine + CO2 = wybutosine(37) in tRNA(Phe) + S-adenosyl-L-homocysteine + 2 H(+). The protein operates within tRNA modification; wybutosine-tRNA(Phe) biosynthesis. In terms of biological role, S-adenosyl-L-methionine-dependent methyltransferase that acts as a component of the wybutosine biosynthesis pathway. Wybutosine is a hyper modified guanosine with a tricyclic base found at the 3'-position adjacent to the anticodon of eukaryotic phenylalanine tRNA. Catalyzes the final 2 independent reactions, methylation of the alpha-carboxy group of wybutosine-72 to form wybutosine-58, and methoxycarbonylation of alpha-amino group of wybutosine-58 through the fixation of CO(2) to complete wybutosine. This is tRNA wybutosine-synthesizing protein 4 (PPM2) from Saccharomyces cerevisiae (strain ATCC 204508 / S288c) (Baker's yeast).